Reading from the N-terminus, the 285-residue chain is Probable endonuclease 4 (285 aa).

9 residues coordinate Zn(2+): His-67, His-107, Glu-144, Asp-178, His-181, His-215, Asp-228, His-230, and Glu-260.

It belongs to the AP endonuclease 2 family. It depends on Zn(2+) as a cofactor.

The enzyme catalyses Endonucleolytic cleavage to 5'-phosphooligonucleotide end-products.. Endonuclease IV plays a role in DNA repair. It cleaves phosphodiester bonds at apurinic or apyrimidinic (AP) sites, generating a 3'-hydroxyl group and a 5'-terminal sugar phosphate. In Chloroflexus aurantiacus (strain ATCC 29366 / DSM 635 / J-10-fl), this protein is Probable endonuclease 4.